The following is a 444-amino-acid chain: Probable glycine dehydrogenase (decarboxylating) subunit 1 (444 aa).

This sequence belongs to the GcvP family. N-terminal subunit subfamily. In terms of assembly, the glycine cleavage system is composed of four proteins: P, T, L and H. In this organism, the P 'protein' is a heterodimer of two subunits.

The enzyme catalyses N(6)-[(R)-lipoyl]-L-lysyl-[glycine-cleavage complex H protein] + glycine + H(+) = N(6)-[(R)-S(8)-aminomethyldihydrolipoyl]-L-lysyl-[glycine-cleavage complex H protein] + CO2. In terms of biological role, the glycine cleavage system catalyzes the degradation of glycine. The P protein binds the alpha-amino group of glycine through its pyridoxal phosphate cofactor; CO(2) is released and the remaining methylamine moiety is then transferred to the lipoamide cofactor of the H protein. The polypeptide is Probable glycine dehydrogenase (decarboxylating) subunit 1 (Prosthecochloris aestuarii (strain DSM 271 / SK 413)).